Here is a 212-residue protein sequence, read N- to C-terminus: MSNPRIEELPDNEEPTKQQVTAEDEGSDSSDSEAEGEEVAGIPAGSQVAFSRNEKKARKSIAKLGLTRVPGITRVTLRRPKNILFVINQPEVYKSPTSNTYIVFGEAKIEDLNSQAQASAAAQLAAQESHDHAGHDHSGHDHSHDHGKGKAVDTEEKKEEEEDDTEEVDATGLEDKDIELVMTQASVSRNKAVKALKENDNDIVNSIMALSI.

2 disordered regions span residues 1 to 54 (MSNP…SRNE) and 123 to 177 (QLAA…EDKD). Residues 22–38 (AEDEGSDSSDSEAEGEE) show a composition bias toward acidic residues. The NAC-A/B domain occupies 51 to 116 (SRNEKKARKS…AKIEDLNSQA (66 aa)). The span at 128–157 (ESHDHAGHDHSGHDHSHDHGKGKAVDTEEK) shows a compositional bias: basic and acidic residues. Residues 158–169 (KEEEEDDTEEVD) show a composition bias toward acidic residues. The UBA domain maps to 173–212 (LEDKDIELVMTQASVSRNKAVKALKENDNDIVNSIMALSI).

The protein belongs to the NAC-alpha family. Part of the nascent polypeptide-associated complex (NAC), consisting of EGD2 and EGD1. NAC associates with ribosomes via EGD1.

Its subcellular location is the cytoplasm. The protein localises to the nucleus. Its function is as follows. Component of the nascent polypeptide-associated complex (NAC), a dynamic component of the ribosomal exit tunnel, protecting the emerging polypeptides from interaction with other cytoplasmic proteins to ensure appropriate nascent protein targeting. The NAC complex also promotes mitochondrial protein import by enhancing productive ribosome interactions with the outer mitochondrial membrane and blocks the inappropriate interaction of ribosomes translating non-secretory nascent polypeptides with translocation sites in the membrane of the endoplasmic reticulum. EGD2 may also be involved in transcription regulation. The protein is Nascent polypeptide-associated complex subunit alpha (egd2) of Botryotinia fuckeliana (strain B05.10) (Noble rot fungus).